The chain runs to 428 residues: Lysophosphatidic acid phosphatase type 6 (428 aa).

A mitochondrion-targeting transit peptide spans 1–32 (MITGVFSMRLWTPVGVLTSLAYCLHQRRVALA). Positions 58 to 168 (RHGARSPLKP…VFIRSTNIFR (111 aa)) are substrate binding. The Nucleophile role is filled by His-59. Asp-335 (proton donor) is an active-site residue.

Belongs to the histidine acid phosphatase family. Monomer. Highly expressed in kidney, heart, small intestine, muscle, liver, prostate, testis, ovary and weakly expressed in thymus and colon.

Its subcellular location is the mitochondrion. It catalyses the reaction a phosphate monoester + H2O = an alcohol + phosphate. The enzyme catalyses 1-(9Z-octadecenoyl)-sn-glycero-3-phosphate + H2O = 1-(9Z-octadecenoyl)-sn-glycerol + phosphate. In terms of biological role, hydrolyzes lysophosphatidic acid (LPA) containing a medium length fatty acid chain to the corresponding monoacylglycerol. Has highest activity with lysophosphatidic acid containing myristate (C14:0), monounsaturated oleate (C18:1) or palmitate (C16:0), and lower activity with C18:0 and C6:0 lysophosphatidic acid. This Homo sapiens (Human) protein is Lysophosphatidic acid phosphatase type 6 (ACP6).